Here is a 300-residue protein sequence, read N- to C-terminus: Cutinase est2 (300 aa).

The N-terminal stretch at M1–A39 is a signal peptide. Residue Y99 participates in poly(ethylene terephthalate) binding. Residue S169 is the Nucleophile of the active site. Poly(ethylene terephthalate)-binding residues include M170 and W194. E213 serves as a coordination point for Ca(2+). D215 functions as the Charge relay system in the catalytic mechanism. D243 serves as a coordination point for Ca(2+). The Charge relay system role is filled by H247. A disulfide bridge links C280 with C298. E292 is a Ca(2+) binding site.

The protein belongs to the AB hydrolase superfamily. In terms of assembly, monomer. Requires Ca(2+) as cofactor.

The protein resides in the secreted. The protein localises to the periplasm. The enzyme catalyses an acetyl ester + H2O = an aliphatic alcohol + acetate + H(+). It catalyses the reaction (ethylene terephthalate)(n) + H2O = (ethylene terephthalate)(n-1) + 4-[(2-hydroxyethoxy)carbonyl]benzoate + H(+). It carries out the reaction a butanoate ester + H2O = an aliphatic alcohol + butanoate + H(+). The catalysed reaction is cutin + H2O = cutin monomers.. The enzyme catalyses a hexanoate ester + H2O = an aliphatic alcohol + hexanoate + H(+). It catalyses the reaction an octanoate ester + H2O = an aliphatic alcohol + octanoate + H(+). Activated by calcium ions. Activated by magnesium ions. Activated by manganese ions. Inhibited by the serine hydrolase inhibitor phenylmethanesulfonyl fluoride (PMSF). Inhibited by the chelator ethylenediaminetetraacetic acid (EDTA). Inhibited by iron ions. Inhibited by aluminum ions. Inhibited by rubidium ions. Inhibited by lithium ions. Its function is as follows. Catalyzes the hydrolysis of cutin, a polyester that forms the structure of plant cuticle. Shows esterase activity towards p-nitrophenol-linked aliphatic esters (pNP-aliphatic esters). Capable of degrading the plastic poly(ethylene terephthalate) (PET), the most abundant polyester plastic in the world. Can also depolymerize the synthetic polyesters poly(epsilon-caprolactone) (PCL), poly(butylene succinate-co-adipate) (PBSA), poly(butylene succinate) (PBS), and poly(lactic acid) (PLA). In Thermobifida alba (Thermomonospora alba), this protein is Cutinase est2.